The sequence spans 771 residues: Solute carrier family 7 member 14 (771 aa).

Transmembrane regions (helical) follow at residues 58 to 78 (LISLGVGSCVGTGMYVVSGLV), 83 to 103 (AGPGVIVSFIIAAVASILSGV), 130 to 150 (FVAFFIGWNLILEYLIGTAAG), 187 to 207 (YPDLLALVIAIIVTIIVALGV), 216 to 236 (VLNVLNLAVWVFIMIAGFFFI), and 251 to 271 (WSGVLQGAATCFYAFIGFDII). N282 carries N-linked (GlcNAc...) asparagine glycosylation. The next 5 membrane-spanning stretches (helical) occupy residues 291 to 311 (ASLVICLTAYVSVSMILTLMV), 336 to 356 (FVVAIGSVAGLTVSLLGSLFP), 360 to 380 (VIYAMAGDGLLFRFLAHVSSY), 384 to 404 (PVVACIVSGFLAALLSLLVSL), and 407 to 427 (LIEMMSIGTLLAYTLVSVCVL). A phosphoserine mark is found at S465, S468, and S488. 4 consecutive transmembrane segments (helical) span residues 565 to 585 (VTICVLLLFILMFVFCSFIIF), 596 to 616 (WAILLVVLMVLLISALVFVIL), 628 to 648 (MAPCLPFVPAFAMLVNIYLML), and 655 to 675 (WIRFAVWCFVGMLIYFGYGIW). A glycan (N-linked (GlcNAc...) asparagine) is linked at N676. The segment at 712–771 (TEGESQENWGGPAEDKGFYYQQMSDTQPNTRTSSKAKSKSKHKQNSEALIANDELDYSPE) is disordered. Positions 732–743 (QQMSDTQPNTRT) are enriched in polar residues. A compositionally biased stretch (basic residues) spans 745-754 (SKAKSKSKHK). Phosphoserine is present on residues S757 and S769.

Belongs to the amino acid-polyamine-organocation (APC) superfamily. Cationic amino acid transporter (CAT) (TC 2.A.3.3) family.

Its subcellular location is the lysosome membrane. The catalysed reaction is 4-aminobutanoate(in) = 4-aminobutanoate(out). Functionally, imports 4-aminobutanoate (GABA) into lysosomes. May act as a GABA sensor that regulates mTORC2-dependent INS signaling and gluconeogenesis. The transport mechanism and substrate selectivity remain to be elucidated. In Bos taurus (Bovine), this protein is Solute carrier family 7 member 14.